The chain runs to 89 residues: Small ribosomal subunit protein bS20 (89 aa).

The protein belongs to the bacterial ribosomal protein bS20 family.

Binds directly to 16S ribosomal RNA. In Wolbachia sp. subsp. Brugia malayi (strain TRS), this protein is Small ribosomal subunit protein bS20.